The chain runs to 131 residues: Glycine cleavage system H protein (131 aa).

A Lipoyl-binding domain is found at T24–Q106. K65 bears the N6-lipoyllysine mark.

Belongs to the GcvH family. As to quaternary structure, the glycine cleavage system is composed of four proteins: P, T, L and H. (R)-lipoate serves as cofactor.

The glycine cleavage system catalyzes the degradation of glycine. The H protein shuttles the methylamine group of glycine from the P protein to the T protein. The sequence is that of Glycine cleavage system H protein from Mycolicibacterium vanbaalenii (strain DSM 7251 / JCM 13017 / BCRC 16820 / KCTC 9966 / NRRL B-24157 / PYR-1) (Mycobacterium vanbaalenii).